The chain runs to 281 residues: Auxin-responsive protein IAA10 (281 aa).

2 disordered regions span residues methionine 1–tryptophan 115 and alanine 130–glutamate 157. The segment covering glycine 7–glutamate 17 has biased composition (low complexity). Acidic residues predominate over residues alanine 18–glutamate 35. Positions leucine 36–leucine 40 match the EAR-like (transcriptional repression) motif. 2 stretches are compositionally biased toward low complexity: residues leucine 36–glutamine 49 and proline 63–alanine 84. Positions asparagine 133–glutamate 157 are enriched in basic and acidic residues. The PB1 domain maps to alanine 163 to aspartate 259.

This sequence belongs to the Aux/IAA family. Homodimers and heterodimers. As to expression, highly expressed in flowers. Expressed in shoots.

Its subcellular location is the nucleus. Functionally, aux/IAA proteins are short-lived transcriptional factors that function as repressors of early auxin response genes at low auxin concentrations. The sequence is that of Auxin-responsive protein IAA10 (IAA10) from Oryza sativa subsp. indica (Rice).